A 651-amino-acid polypeptide reads, in one-letter code: Macrolide export ATP-binding/permease protein MacB (651 aa).

The region spanning 2-239 (IEIVNVTKTY…PQMPQGGMEA (238 aa)) is the ABC transporter domain. ATP is bound at residue 38-45 (GASGSGKS). A run of 4 helical transmembrane segments spans residues 269-289 (FLSV…MALG), 532-552 (IAAI…LVSV), 589-609 (IIGI…AGWA), and 614-634 (MFSV…FGLW).

Belongs to the ABC transporter superfamily. Macrolide exporter (TC 3.A.1.122) family. As to quaternary structure, homodimer.

The protein localises to the cell inner membrane. In terms of biological role, non-canonical ABC transporter that contains transmembrane domains (TMD), which form a pore in the inner membrane, and an ATP-binding domain (NBD), which is responsible for energy generation. Confers resistance against macrolides. This is Macrolide export ATP-binding/permease protein MacB from Chlorobaculum tepidum (strain ATCC 49652 / DSM 12025 / NBRC 103806 / TLS) (Chlorobium tepidum).